An 835-amino-acid chain; its full sequence is Involucrin (835 aa).

Polar residues predominate over residues 1–15; the sequence is MSQQHTLPVTLSPAL. Disordered regions lie at residues 1 to 133, 150 to 206, 221 to 285, 321 to 342, 381 to 428, 446 to 486, 501 to 548, and 566 to 809; these read MSQQ…LDQR, EQLL…LEVP, GQLK…QLKH, GQLK…QEGQ, GQLK…VPEE, LDQQ…LEVP, and LDQQ…QPAL. The segment covering 76-91 has biased composition (low complexity); it reads EQQQQEPQEQELQQQH. Basic and acidic residues-rich tracts occupy residues 92 to 115 and 159 to 168; these read WEQH…KAQR and QEQHLKHLEQ. Residues 169–181 are compositionally biased toward low complexity; that stretch reads QEGQLELPEQQEG. Basic and acidic residues-rich tracts occupy residues 182-198 and 222-268; these read QLKH…HLEQ and QLKH…HLDQ. 3 stretches are compositionally biased toward low complexity: residues 269–281, 329–341, and 389–401; these read QEGQ…QQEG. Basic and acidic residues-rich tracts occupy residues 402–421 and 446–464; these read QLKH…HQEG and LDQQ…KQLE. Positions 509 to 521 are enriched in low complexity; it reads QEGQLELPEQQEG. 3 stretches are compositionally biased toward basic and acidic residues: residues 522 to 541, 566 to 584, and 594 to 620; these read QLKH…HQEG, LDQQ…KQLE, and KHLE…EHQE. Over residues 655-668 the composition is skewed to low complexity; the sequence is HLVQQEGQLEQQEG. Basic and acidic residues predominate over residues 669–685; the sequence is QVEHLEEQVGQLKHLEE. Over residues 693 to 710 the composition is skewed to low complexity; that stretch reads LEQQQGQLEVPEQQVGQP. 3 stretches are compositionally biased toward basic and acidic residues: residues 711–721, 729–738, and 751–775; these read KHLEQEEKQLE, QLKHLEKQEA, and KHLE…HLEQ. Residues 776–789 show a composition bias toward polar residues; the sequence is QEGQLKNLEQQKGQ.

Belongs to the involucrin family. Directly or indirectly cross-linked to cornifelin (CNFN). Post-translationally, substrate of transglutaminase. Specific glutamines or lysines are cross-linked to keratins, desmoplakin and to inter involucrin molecules. In terms of tissue distribution, keratinocytes of epidermis and other stratified squamous epithelia.

It localises to the cytoplasm. In terms of biological role, part of the insoluble cornified cell envelope (CE) of stratified squamous epithelia. The chain is Involucrin (IVL) from Pongo pygmaeus (Bornean orangutan).